Reading from the N-terminus, the 467-residue chain is Uronate isomerase (467 aa).

Belongs to the metallo-dependent hydrolases superfamily. Uronate isomerase family.

The enzyme catalyses D-glucuronate = D-fructuronate. It carries out the reaction aldehydo-D-galacturonate = keto-D-tagaturonate. Its pathway is carbohydrate metabolism; pentose and glucuronate interconversion. The chain is Uronate isomerase from Clostridium acetobutylicum (strain ATCC 824 / DSM 792 / JCM 1419 / IAM 19013 / LMG 5710 / NBRC 13948 / NRRL B-527 / VKM B-1787 / 2291 / W).